The primary structure comprises 264 residues: 4-oxalocrotonate decarboxylase (264 aa).

The protein belongs to the hydratase/decarboxylase family.

The catalysed reaction is (3E)-2-oxohex-3-enedioate + H(+) = 2-oxopent-4-enoate + CO2. It participates in xenobiotic degradation; toluene degradation. The polypeptide is 4-oxalocrotonate decarboxylase (xylI) (Pseudomonas putida (Arthrobacter siderocapsulatus)).